The sequence spans 130 residues: Large ribosomal subunit protein bL12 (130 aa).

This sequence belongs to the bacterial ribosomal protein bL12 family. In terms of assembly, homodimer. Part of the ribosomal stalk of the 50S ribosomal subunit. Forms a multimeric L10(L12)X complex, where L10 forms an elongated spine to which 2 to 4 L12 dimers bind in a sequential fashion. Binds GTP-bound translation factors.

Functionally, forms part of the ribosomal stalk which helps the ribosome interact with GTP-bound translation factors. Is thus essential for accurate translation. This chain is Large ribosomal subunit protein bL12, found in Mycolicibacterium vanbaalenii (strain DSM 7251 / JCM 13017 / BCRC 16820 / KCTC 9966 / NRRL B-24157 / PYR-1) (Mycobacterium vanbaalenii).